The following is a 210-amino-acid chain: Probable nicotinate-nucleotide adenylyltransferase (210 aa).

Belongs to the NadD family.

It carries out the reaction nicotinate beta-D-ribonucleotide + ATP + H(+) = deamido-NAD(+) + diphosphate. Its pathway is cofactor biosynthesis; NAD(+) biosynthesis; deamido-NAD(+) from nicotinate D-ribonucleotide: step 1/1. In terms of biological role, catalyzes the reversible adenylation of nicotinate mononucleotide (NaMN) to nicotinic acid adenine dinucleotide (NaAD). The polypeptide is Probable nicotinate-nucleotide adenylyltransferase (Streptococcus mutans serotype c (strain ATCC 700610 / UA159)).